The primary structure comprises 301 residues: Protoheme IX farnesyltransferase (301 aa).

Helical transmembrane passes span 34–54 (LVVFTAITGMLIAPGTIHPLI), 55–75 (GLVSTVCVALGAGAAGAFNMW), 102–121 (AWECGMVLATLSVFVMAIAV), 125–144 (SALLLAGSIFSYAVVYTMLL), 152–172 (IVIGGIAGAFPPVIGWASVSG), 181–201 (LFAIIFVWTPPHFWAIALLTL), 222–242 (SHILLYSIILAVVGATPGLFV), 247–267 (LYEILATGLSATFIAYAIAVF), and 280–300 (GLFKYSIYYLFLLFAVVIACV).

The protein belongs to the UbiA prenyltransferase family. Protoheme IX farnesyltransferase subfamily.

Its subcellular location is the cell inner membrane. The catalysed reaction is heme b + (2E,6E)-farnesyl diphosphate + H2O = Fe(II)-heme o + diphosphate. It participates in porphyrin-containing compound metabolism; heme O biosynthesis; heme O from protoheme: step 1/1. Converts heme B (protoheme IX) to heme O by substitution of the vinyl group on carbon 2 of heme B porphyrin ring with a hydroxyethyl farnesyl side group. This is Protoheme IX farnesyltransferase from Anaplasma marginale (strain Florida).